A 1043-amino-acid chain; its full sequence is NACHT, LRR and PYD domains-containing protein 13 (1043 aa).

A Pyrin domain is found at 1 to 107 (MNFSVITCPN…CEKVRAEMKE (107 aa)). The NACHT domain maps to 229–558 (QTIVLVGRAG…VLEEPREFPP (330 aa)). ATP is bound at residue 235-242 (GRAGVGKT). 7 LRR repeats span residues 725–749 (NENL…LCLA), 781–804 (NSKL…ILKA), 837–864 (IQHV…ALTH), 894–917 (NRSL…FLCE), 923–946 (DGNL…ELAN), 951–978 (NHNV…ALKP), and 1007–1030 (SKSL…MLCK).

Belongs to the NLRP family.

Functionally, involved in inflammation. This is NACHT, LRR and PYD domains-containing protein 13 (NLRP13) from Homo sapiens (Human).